The chain runs to 343 residues: N-acetyl-gamma-glutamyl-phosphate reductase (343 aa).

The active site involves Cys147.

The protein belongs to the NAGSA dehydrogenase family. Type 1 subfamily.

It is found in the cytoplasm. It carries out the reaction N-acetyl-L-glutamate 5-semialdehyde + phosphate + NADP(+) = N-acetyl-L-glutamyl 5-phosphate + NADPH + H(+). Its pathway is amino-acid biosynthesis; L-arginine biosynthesis; N(2)-acetyl-L-ornithine from L-glutamate: step 3/4. Catalyzes the NADPH-dependent reduction of N-acetyl-5-glutamyl phosphate to yield N-acetyl-L-glutamate 5-semialdehyde. The chain is N-acetyl-gamma-glutamyl-phosphate reductase from Staphylococcus aureus (strain MRSA252).